The sequence spans 141 residues: Endoribonuclease YbeY (141 aa).

Zn(2+)-binding residues include H105, H109, and D115.

The protein belongs to the endoribonuclease YbeY family. Zn(2+) serves as cofactor.

Its subcellular location is the cytoplasm. Its function is as follows. Single strand-specific metallo-endoribonuclease involved in late-stage 70S ribosome quality control and in maturation of the 3' terminus of the 16S rRNA. The sequence is that of Endoribonuclease YbeY from Karelsulcia muelleri (strain GWSS) (Sulcia muelleri).